We begin with the raw amino-acid sequence, 295 residues long: tRNA(Ile)-lysidine synthase (295 aa).

10–15 (SGGPDS) contacts ATP.

The protein belongs to the tRNA(Ile)-lysidine synthase family.

It is found in the cytoplasm. The enzyme catalyses cytidine(34) in tRNA(Ile2) + L-lysine + ATP = lysidine(34) in tRNA(Ile2) + AMP + diphosphate + H(+). Ligates lysine onto the cytidine present at position 34 of the AUA codon-specific tRNA(Ile) that contains the anticodon CAU, in an ATP-dependent manner. Cytidine is converted to lysidine, thus changing the amino acid specificity of the tRNA from methionine to isoleucine. This is tRNA(Ile)-lysidine synthase from Malacoplasma penetrans (strain HF-2) (Mycoplasma penetrans).